We begin with the raw amino-acid sequence, 485 residues long: Hemolysin (485 aa).

The N-terminal stretch at 1–28 (MKNFKGRKFLTCVLVSLCTLNYSSISFA) is a signal peptide. The next 4 beta stranded transmembrane spans lie at 196 to 209 (KAQI…NAKY), 216 to 225 (IDFNAVANGE), 294 to 303 (SKDVQAAFKA), and 311 to 323 (ETSG…FEES). Positions 465 to 475 (ECTGLAWEWWR) match the Conserved undecapeptide motif.

Belongs to the cholesterol-dependent cytolysin family. As to quaternary structure, homooligomeric pore complex of 35 to 50 subunits; when inserted in the host membrane.

It localises to the secreted. The protein localises to the host cell membrane. Functionally, a cholesterol-dependent toxin with hemolytic activity against host red blood cells. Causes cytolysis by forming pores in cholesterol containing host membranes. binding to target membranes, the protein undergoes a major conformation change, leading to its insertion in the host membrane and formation of an oligomeric pore complex. Cholesterol is required for binding to host membranes, membrane insertion and pore formation; cholesterol binding is mediated by a Thr-Leu pair in the C-terminus. Can be reversibly inactivated by oxidation. This Bacillus cereus protein is Hemolysin.